Consider the following 1773-residue polypeptide: Mucin-22 (1773 aa).

A signal peptide spans 1–26; the sequence is MRRGNISPAFWFLWLLLFGLLGPSSE. The Extracellular portion of the chain corresponds to 27–1660; that stretch reads NTTAFTKGSD…VIKPSGYLQP (1634 aa). 8 disordered regions span residues 61-102, 176-357, 372-405, 434-572, 590-674, 754-1026, 1064-1485, and 1603-1639; these read TGSK…TDSG, TMAS…SETT, MGSE…VGSE, SETI…STAS, TVGS…EGSE, DTTT…ETTM, TTIA…GSET, and MGAS…SMGT. The interval 153 to 1514 is 124 X 10 AA approximate repeats; sequence MASSTTSTAG…PTATSLTGSE (1362 aa). Positions 178 to 243 are enriched in low complexity; sequence ASTTGSETAT…GSEATTTSTA (66 aa). The span at 248 to 258 shows a compositional bias: polar residues; that stretch reads ITASSMSSETT. Positions 262 to 357 are enriched in low complexity; that stretch reads AAGSNTTTAS…TVSTAGSETT (96 aa). 2 stretches are compositionally biased toward low complexity: residues 440-481 and 490-546; these read STAG…AAST and STAG…SEPT. Polar residues predominate over residues 547–572; sequence MASTMGSETTMASTIGPETTKVSTAS. Composition is skewed to low complexity over residues 755–1025 and 1064–1465; these read TTTA…SETT and TTIA…GSET. Polar residues-rich tracts occupy residues 1466–1485 and 1615–1639; these read NTAC…GSET and RTTT…SMGT. Residues 1661-1681 traverse the membrane as a helical segment; that stretch reads WAIILISLAAVVAAVGLSVGL. Over 1682 to 1773 the chain is Cytoplasmic; it reads SFCLRNLFFP…GGHYGHGGGH (92 aa).

Expressed in lung by serous cells of the submucosal gland (at protein level). Detected in the placenta, lung and testis.

It localises to the membrane. The polypeptide is Mucin-22 (MUC22) (Homo sapiens (Human)).